A 638-amino-acid chain; its full sequence is Threonine--tRNA ligase (638 aa).

Residues 1–61 (MVAITLPDGK…DRDVNLSIIT (61 aa)) enclose the TGS domain. The tract at residues 244–536 (DHRRLGREME…LIENFAGRFP (293 aa)) is catalytic. 3 residues coordinate Zn(2+): Cys336, His387, and His513.

This sequence belongs to the class-II aminoacyl-tRNA synthetase family. In terms of assembly, homodimer. It depends on Zn(2+) as a cofactor.

The protein resides in the cytoplasm. It catalyses the reaction tRNA(Thr) + L-threonine + ATP = L-threonyl-tRNA(Thr) + AMP + diphosphate + H(+). Functionally, catalyzes the attachment of threonine to tRNA(Thr) in a two-step reaction: L-threonine is first activated by ATP to form Thr-AMP and then transferred to the acceptor end of tRNA(Thr). Also edits incorrectly charged L-seryl-tRNA(Thr). In Paramagnetospirillum magneticum (strain ATCC 700264 / AMB-1) (Magnetospirillum magneticum), this protein is Threonine--tRNA ligase.